The chain runs to 1463 residues: DNA-directed RNA polymerase subunit beta'' (1463 aa).

Residues Cys-239, Cys-312, Cys-319, and Cys-322 each coordinate Zn(2+). Disordered regions lie at residues 836 to 869 (TFTG…ETRM) and 987 to 1007 (TNRS…AQAR). Over residues 860 to 869 (AANSSHETRM) the composition is skewed to polar residues. Basic residues predominate over residues 987–996 (TNRSKTRRNA). Positions 997-1007 (SGKTQVKAQAR) are enriched in polar residues.

This sequence belongs to the RNA polymerase beta' chain family. RpoC2 subfamily. As to quaternary structure, in plastids the minimal PEP RNA polymerase catalytic core is composed of four subunits: alpha, beta, beta', and beta''. When a (nuclear-encoded) sigma factor is associated with the core the holoenzyme is formed, which can initiate transcription. The cofactor is Zn(2+).

The protein resides in the plastid. It is found in the chloroplast. It catalyses the reaction RNA(n) + a ribonucleoside 5'-triphosphate = RNA(n+1) + diphosphate. DNA-dependent RNA polymerase catalyzes the transcription of DNA into RNA using the four ribonucleoside triphosphates as substrates. The chain is DNA-directed RNA polymerase subunit beta'' from Nephroselmis olivacea (Green alga).